We begin with the raw amino-acid sequence, 120 residues long: Phosphoribosyl-AMP cyclohydrolase (120 aa).

Asp-75 contacts Mg(2+). Residue Cys-76 coordinates Zn(2+). 2 residues coordinate Mg(2+): Asp-77 and Asp-79. Zn(2+)-binding residues include Cys-92 and Cys-99.

Belongs to the PRA-CH family. Homodimer. Mg(2+) is required as a cofactor. Requires Zn(2+) as cofactor.

It is found in the cytoplasm. The catalysed reaction is 1-(5-phospho-beta-D-ribosyl)-5'-AMP + H2O = 1-(5-phospho-beta-D-ribosyl)-5-[(5-phospho-beta-D-ribosylamino)methylideneamino]imidazole-4-carboxamide. The protein operates within amino-acid biosynthesis; L-histidine biosynthesis; L-histidine from 5-phospho-alpha-D-ribose 1-diphosphate: step 3/9. Functionally, catalyzes the hydrolysis of the adenine ring of phosphoribosyl-AMP. The polypeptide is Phosphoribosyl-AMP cyclohydrolase (Haloarcula marismortui (strain ATCC 43049 / DSM 3752 / JCM 8966 / VKM B-1809) (Halobacterium marismortui)).